The following is a 326-amino-acid chain: Ornithine carbamoyltransferase (326 aa).

Residues 57 to 60 (STRT), Gln84, Arg108, and 135 to 138 (HPTQ) each bind carbamoyl phosphate. L-ornithine is bound by residues Asn169, Asp233, and 237 to 238 (SM). Residue 275 to 276 (CL) coordinates carbamoyl phosphate.

The protein belongs to the aspartate/ornithine carbamoyltransferase superfamily. OTCase family.

The protein resides in the cytoplasm. The catalysed reaction is carbamoyl phosphate + L-ornithine = L-citrulline + phosphate + H(+). Its pathway is amino-acid biosynthesis; L-arginine biosynthesis; L-arginine from L-ornithine and carbamoyl phosphate: step 1/3. Functionally, reversibly catalyzes the transfer of the carbamoyl group from carbamoyl phosphate (CP) to the N(epsilon) atom of ornithine (ORN) to produce L-citrulline. The polypeptide is Ornithine carbamoyltransferase (Escherichia coli O6:K15:H31 (strain 536 / UPEC)).